Reading from the N-terminus, the 543-residue chain is Cyclohexanone 1,2-monooxygenase (543 aa).

Residues phenylalanine 16, aspartate 37, tryptophan 46, aspartate 57, tyrosine 63, and valine 110 each coordinate FAD.

This sequence belongs to the FAD-binding monooxygenase family. FAD serves as cofactor.

It carries out the reaction cyclohexanone + NADPH + O2 + H(+) = hexano-6-lactone + NADP(+) + H2O. The sequence is that of Cyclohexanone 1,2-monooxygenase from Acinetobacter sp.